A 555-amino-acid chain; its full sequence is Formate--tetrahydrofolate ligase (555 aa).

The protein belongs to the formate--tetrahydrofolate ligase family.

The catalysed reaction is (6S)-5,6,7,8-tetrahydrofolate + formate + ATP = (6R)-10-formyltetrahydrofolate + ADP + phosphate. It functions in the pathway one-carbon metabolism; tetrahydrofolate interconversion. The sequence is that of Formate--tetrahydrofolate ligase from Porphyromonas gingivalis (strain ATCC BAA-308 / W83).